The primary structure comprises 162 residues: Cyclic pyranopterin monophosphate synthase (162 aa).

Substrate contacts are provided by residues 75 to 77 (LCH) and 113 to 114 (ME). Asp128 is a catalytic residue.

It belongs to the MoaC family. In terms of assembly, homohexamer; trimer of dimers.

The catalysed reaction is (8S)-3',8-cyclo-7,8-dihydroguanosine 5'-triphosphate = cyclic pyranopterin phosphate + diphosphate. Its pathway is cofactor biosynthesis; molybdopterin biosynthesis. Functionally, catalyzes the conversion of (8S)-3',8-cyclo-7,8-dihydroguanosine 5'-triphosphate to cyclic pyranopterin monophosphate (cPMP). In Burkholderia orbicola (strain MC0-3), this protein is Cyclic pyranopterin monophosphate synthase.